The chain runs to 159 residues: Putative 4-hydroxy-4-methyl-2-oxoglutarate aldolase (159 aa).

Substrate is bound by residues Gly75 to Leu78 and Arg97. Asp98 contacts a divalent metal cation.

This sequence belongs to the class II aldolase/RraA-like family. As to quaternary structure, homotrimer. The cofactor is a divalent metal cation.

It catalyses the reaction 4-hydroxy-4-methyl-2-oxoglutarate = 2 pyruvate. The catalysed reaction is oxaloacetate + H(+) = pyruvate + CO2. Catalyzes the aldol cleavage of 4-hydroxy-4-methyl-2-oxoglutarate (HMG) into 2 molecules of pyruvate. Also contains a secondary oxaloacetate (OAA) decarboxylase activity due to the common pyruvate enolate transition state formed following C-C bond cleavage in the retro-aldol and decarboxylation reactions. The chain is Putative 4-hydroxy-4-methyl-2-oxoglutarate aldolase from Aromatoleum aromaticum (strain DSM 19018 / LMG 30748 / EbN1) (Azoarcus sp. (strain EbN1)).